A 317-amino-acid polypeptide reads, in one-letter code: Ribosomal protein L11 methyltransferase (317 aa).

Positions 158, 179, 201, and 244 each coordinate S-adenosyl-L-methionine.

Belongs to the methyltransferase superfamily. PrmA family.

The protein resides in the cytoplasm. It carries out the reaction L-lysyl-[protein] + 3 S-adenosyl-L-methionine = N(6),N(6),N(6)-trimethyl-L-lysyl-[protein] + 3 S-adenosyl-L-homocysteine + 3 H(+). In terms of biological role, methylates ribosomal protein L11. The chain is Ribosomal protein L11 methyltransferase from Streptococcus pyogenes serotype M12 (strain MGAS2096).